The following is a 407-amino-acid chain: Na(+)-translocating NADH-quinone reductase subunit F (407 aa).

The chain crosses the membrane as a helical span at residues 4–24 (IILGVFFFTAIVVALVFVILG). Residues 33 to 125 (GNVEVLINGE…NMKIHVHEEV (93 aa)) form the 2Fe-2S ferredoxin-type domain. C68, C74, C77, and C109 together coordinate [2Fe-2S] cluster. Residues 128–269 (VKKWECTVRS…SGPFGEFFAR (142 aa)) enclose the FAD-binding FR-type domain.

Belongs to the NqrF family. As to quaternary structure, composed of six subunits; NqrA, NqrB, NqrC, NqrD, NqrE and NqrF. Requires [2Fe-2S] cluster as cofactor. FAD serves as cofactor.

Its subcellular location is the cell inner membrane. It carries out the reaction a ubiquinone + n Na(+)(in) + NADH + H(+) = a ubiquinol + n Na(+)(out) + NAD(+). In terms of biological role, NQR complex catalyzes the reduction of ubiquinone-1 to ubiquinol by two successive reactions, coupled with the transport of Na(+) ions from the cytoplasm to the periplasm. The first step is catalyzed by NqrF, which accepts electrons from NADH and reduces ubiquinone-1 to ubisemiquinone by a one-electron transfer pathway. This is Na(+)-translocating NADH-quinone reductase subunit F from Methylococcus capsulatus (strain ATCC 33009 / NCIMB 11132 / Bath).